The following is a 329-amino-acid chain: Phenylalanine--tRNA ligase alpha subunit (329 aa).

Residue Glu254 coordinates Mg(2+).

The protein belongs to the class-II aminoacyl-tRNA synthetase family. Phe-tRNA synthetase alpha subunit type 1 subfamily. As to quaternary structure, tetramer of two alpha and two beta subunits. Mg(2+) is required as a cofactor.

Its subcellular location is the cytoplasm. The enzyme catalyses tRNA(Phe) + L-phenylalanine + ATP = L-phenylalanyl-tRNA(Phe) + AMP + diphosphate + H(+). This Haemophilus influenzae (strain PittEE) protein is Phenylalanine--tRNA ligase alpha subunit.